The chain runs to 146 residues: Vascular endothelial growth factor isoform GtVF (146 aa).

Positions 1–24 (MAAYLLAVAILFCIQGWPSGTVQG) are cleaved as a signal peptide. Gln25 is subject to Pyrrolidone carboxylic acid. Intrachain disulfides connect Cys38/Cys80, Cys69/Cys115, and Cys73/Cys117. A disordered region spans residues 116-146 (ECRPRSRSGVDSGKRKRNPEEGEPRAKFPFV). Basic and acidic residues predominate over residues 133-146 (NPEEGEPRAKFPFV).

The protein belongs to the PDGF/VEGF growth factor family. Snake venom VEGF subfamily. Homodimer; disulfide-linked. Expressed by the venom gland.

The protein localises to the secreted. Functionally, snake venom VEGFs that may contribute to venom dispersion and prey subjugation by inducing vascular permeability and hypotension. This protein induces an increase in capillary permeability after intradermal injection, in a VEGFR-2 (KDR) dependent manner. In addition, it provokes a drastic hypotensive effect after intravenous injection. The hypotension is mediated by nitric oxide (NO), which is produced by VEGF-activated endothelium NO synthase. Also induces angiogenesis in vitro. Unlike other crotalid VEGFs, this protein probably interacts with VEGF receptor-2 (KDR). In Gloydius tsushimaensis (Tsushima Island pitviper), this protein is Vascular endothelial growth factor isoform GtVF.